Here is a 265-residue protein sequence, read N- to C-terminus: Membrane steroid-binding protein 2 (265 aa).

Residues 63 to 85 (WAAARSASPVAVIAAVAGAAVVY) form a helical membrane-spanning segment. Residues 94 to 116 (PPPPPARPREEPSEEAPPPPEPV) are disordered. Residues 118–217 (VGEITAEELL…SKYVKVGTIK (100 aa)) form the Cytochrome b5 heme-binding domain. The segment at 120–217 (EITAEELLQY…SKYVKVGTIK (98 aa)) is steroid-binding.

The protein belongs to the cytochrome b5 family. MAPR subfamily.

Its subcellular location is the cell membrane. Its function is as follows. Binds multiple steroid compounds. The sequence is that of Membrane steroid-binding protein 2 from Oryza sativa subsp. japonica (Rice).